A 427-amino-acid polypeptide reads, in one-letter code: NADPH-dependent stearoyl-CoA 9-desaturase (427 aa).

Fe cation contacts are provided by histidine 90, histidine 94, histidine 125, histidine 129, histidine 130, histidine 304, histidine 308, and histidine 309.

It belongs to the fatty acid desaturase type 1 family. As to quaternary structure, interacts with the electron transfer protein Rv3230c to form a functional acyl-CoA desaturase complex. It depends on Fe(2+) as a cofactor. Post-translationally, is rapidly degraded by a mycobacterial protein degradation system that specifically targets the residues LAA at the C-terminus, leading to a post-translational proteolytic regulation of DesA3 essential activity.

Its subcellular location is the cell membrane. It carries out the reaction octadecanoyl-CoA + NADPH + O2 + H(+) = (9Z)-octadecenoyl-CoA + NADP(+) + 2 H2O. It participates in lipid metabolism; fatty acid metabolism. In terms of biological role, is likely involved in the aerobic desaturation system responsible for the synthesis of oleic acid from stearoyl-CoA; oleic acid is a precursor of mycobacterial membrane phospholipids and triglycerides. Catalyzes the conversion of stearoyl-CoA to oleoyl-CoA by introduction of a cis double bond between carbons 9 and 10 of the acyl chain. Requires the electron transfer partner Rv3230c to pass two electrons from NADPH to its active site diiron center. Is also able to catalyze the 9-desaturation of palmitoyl-CoA to palmitoleoyl-CoA. The protein is NADPH-dependent stearoyl-CoA 9-desaturase (desA3) of Mycobacterium tuberculosis (strain CDC 1551 / Oshkosh).